We begin with the raw amino-acid sequence, 388 residues long: Succinyl-diaminopimelate desuccinylase (388 aa).

A Zn(2+)-binding site is contributed by His-72. Asp-74 is an active-site residue. Asp-105 is a Zn(2+) binding site. Residue Glu-139 is the Proton acceptor of the active site. 3 residues coordinate Zn(2+): Glu-140, Glu-168, and His-353.

Belongs to the peptidase M20A family. DapE subfamily. Homodimer. Requires Zn(2+) as cofactor. Co(2+) serves as cofactor.

It catalyses the reaction N-succinyl-(2S,6S)-2,6-diaminopimelate + H2O = (2S,6S)-2,6-diaminopimelate + succinate. The protein operates within amino-acid biosynthesis; L-lysine biosynthesis via DAP pathway; LL-2,6-diaminopimelate from (S)-tetrahydrodipicolinate (succinylase route): step 3/3. In terms of biological role, catalyzes the hydrolysis of N-succinyl-L,L-diaminopimelic acid (SDAP), forming succinate and LL-2,6-diaminopimelate (DAP), an intermediate involved in the bacterial biosynthesis of lysine and meso-diaminopimelic acid, an essential component of bacterial cell walls. The chain is Succinyl-diaminopimelate desuccinylase from Orientia tsutsugamushi (strain Ikeda) (Rickettsia tsutsugamushi).